The following is a 209-amino-acid chain: Ribosomal RNA large subunit methyltransferase E (209 aa).

5 residues coordinate S-adenosyl-L-methionine: Gly63, Trp65, Asp83, Asp99, and Asp124. Lys164 acts as the Proton acceptor in catalysis.

The protein belongs to the class I-like SAM-binding methyltransferase superfamily. RNA methyltransferase RlmE family.

It localises to the cytoplasm. It catalyses the reaction uridine(2552) in 23S rRNA + S-adenosyl-L-methionine = 2'-O-methyluridine(2552) in 23S rRNA + S-adenosyl-L-homocysteine + H(+). Its function is as follows. Specifically methylates the uridine in position 2552 of 23S rRNA at the 2'-O position of the ribose in the fully assembled 50S ribosomal subunit. In Vibrio cholerae serotype O1 (strain ATCC 39541 / Classical Ogawa 395 / O395), this protein is Ribosomal RNA large subunit methyltransferase E.